We begin with the raw amino-acid sequence, 149 residues long: MKITIEELPELRIAYFRNVGEYGGKQNKELMESFKKWAQLNGVFHNSVILGIPQDDPSITPKEECRYDVGVVLNEDFNVLQPAQVGKLPGGKYAVFLLDHTKEAVSEFWGNIFSEIEKNSLTMRGEPIIERYTSQMIDNHLCEVLVPIQ.

In Bacillus subtilis (strain 168), this protein is SPbeta prophage-derived putative transcriptional regulator YosT (yosT).